We begin with the raw amino-acid sequence, 116 residues long: Large ribosomal subunit protein bL19 (116 aa).

The protein belongs to the bacterial ribosomal protein bL19 family.

Its function is as follows. This protein is located at the 30S-50S ribosomal subunit interface and may play a role in the structure and function of the aminoacyl-tRNA binding site. The protein is Large ribosomal subunit protein bL19 of Geobacillus sp. (strain WCH70).